Here is a 1020-residue protein sequence, read N- to C-terminus: Neurofilament heavy polypeptide (1020 aa).

Positions 1 to 100 (MMSFGGADAL…VATSRSEKEQ (100 aa)) are head. Residues 58–83 (VSASPSRFRGAGAASSTDSLDTLSNG) are disordered. The segment covering 71–82 (ASSTDSLDTLSN) has biased composition (polar residues). Phosphoserine occurs at positions 76 and 124. The IF rod domain occupies 97–413 (EKEQLQALND…KLLEGEECRI (317 aa)). The tract at residues 101 to 132 (LQALNDRFAGYIDKVRQLEAHNRSLEGEAAAL) is coil 1A. The linker 1 stretch occupies residues 133–145 (RQQQAGRSAMGEL). The segment at 146–244 (YEREVREMRG…QEEVGELLGQ (99 aa)) is coil 1B. The interval 245 to 266 (IQGSGAAQAQMQAETRDALKCD) is linker 12. The tract at residues 267 to 288 (VTSALREIRAQLEGHAVQSTLQ) is coil 2A. The segment at 289-292 (SEEW) is linker 2. The coil 2B stretch occupies residues 293–413 (FRVRLDRLSE…KLLEGEECRI (121 aa)). Serine 347 and serine 421 each carry phosphoserine. The tail stretch occupies residues 414 to 1020 (GFGPIPFSLP…ATEDKAAKGK (607 aa)). The tract at residues 456–1020 (IVEEQTEETQ…ATEDKAAKGK (565 aa)) is disordered. 2 stretches are compositionally biased toward acidic residues: residues 459–475 (EQTE…EEEE) and 483–498 (GKEE…EGGE). A phosphoserine mark is found at serine 511, serine 526, serine 532, serine 540, serine 546, serine 552, serine 560, serine 566, serine 574, serine 580, serine 586, serine 594, serine 600, serine 606, serine 614, serine 620, serine 628, serine 634, serine 640, serine 648, serine 654, serine 662, serine 668, serine 676, serine 682, serine 690, serine 696, and serine 704. Residues 511–1020 (SPEKEAKSPV…ATEDKAAKGK (510 aa)) show a composition bias toward basic and acidic residues. 4 tandem repeats follow at residues 525-530 (KSPAEA), 531-536 (KSPEKE), 539-544 (KSPAEV), and 545-550 (KSPEKA). The 30 X 6 AA repeats of K-S-P-[AEPV]-[EAK]-[AEVK] stretch occupies residues 525–826 (KSPAEAKSPE…KEEVKSPVKE (302 aa)). Repeat 5 spans residues 559 to 564 (KSPPEA). Tandem repeats lie at residues 573–578 (KSPAEV) and 579–584 (KSPEKA). Repeat copies occupy residues 593 to 598 (KSPAEA) and 599 to 604 (KSPEKA). Repeat 10 spans residues 613–618 (KSPAEA). Repeat copies occupy residues 627-632 (KSPAEV), 633-638 (KSPEKA), 639-644 (KSPTKE), and 647-652 (KSPEKA). Repeat copies occupy residues 661 to 666 (KSPEKA), 667 to 672 (KSPVKA), 675 to 680 (KSPEKA), 681 to 686 (KSPVKA), 689 to 694 (KSPEKA), 695 to 700 (KSPVKE), 703 to 708 (KSPEKA), 709 to 714 (KSPVKE), 717 to 722 (KSPEKA), 723 to 728 (KSPVKE), 737 to 742 (KSPVKE), and 745 to 750 (KSPEKA). A phosphoserine mark is found at serine 718, serine 724, and serine 738. Phosphoserine is present on residues serine 752 and serine 763. Residues 762-767 (KSPEAK) form repeat 27. Residue threonine 768 is modified to Phosphothreonine. A run of 3 repeats spans residues 786–791 (KSPVKE), 794–799 (KSPEKA), and 821–826 (KSPVKE). Phosphoserine is present on residues serine 787, serine 795, serine 822, and serine 888.

The protein belongs to the intermediate filament family. As to quaternary structure, forms heterodimers with NEFL; which can further hetero-oligomerize (in vitro). Forms heterodimers with INA (in vitro). In terms of processing, there are a number of repeats of the tripeptide K-S-P, NFH is phosphorylated on a number of the serines in this motif. It is thought that phosphorylation of NFH results in the formation of interfilament cross bridges that are important in the maintenance of axonal caliber. Phosphorylation seems to play a major role in the functioning of the larger neurofilament polypeptides (NF-M and NF-H), the levels of phosphorylation being altered developmentally and coincidentally with a change in the neurofilament function. Post-translationally, phosphorylated in the head and rod regions by the PKC kinase PKN1, leading to the inhibition of polymerization.

The protein resides in the cytoplasm. Its subcellular location is the cytoskeleton. The protein localises to the cell projection. It localises to the axon. Its function is as follows. Neurofilaments usually contain three intermediate filament proteins: NEFL, NEFM, and NEFH which are involved in the maintenance of neuronal caliber. NEFH has an important function in mature axons that is not subserved by the two smaller NF proteins. May additionally cooperate with the neuronal intermediate filament proteins PRPH and INA to form neuronal filamentous networks. In Homo sapiens (Human), this protein is Neurofilament heavy polypeptide (NEFH).